A 206-amino-acid polypeptide reads, in one-letter code: Holliday junction branch migration complex subunit RuvA (206 aa).

The tract at residues 1-68 (MITFVRGMLA…EDAMQLFGFL (68 aa)) is domain I. Residues 69-147 (EPGERELFGQ…KWREESGLSA (79 aa)) are domain II. The tract at residues 147-151 (AMGAR) is flexible linker. Residues 152–206 (ASSRVYEEVELALLALGFAPGEVVRALDAVAPAMAGEEQTEAWLRAAIAWLSEQG) form a domain III region.

It belongs to the RuvA family. As to quaternary structure, homotetramer. Forms an RuvA(8)-RuvB(12)-Holliday junction (HJ) complex. HJ DNA is sandwiched between 2 RuvA tetramers; dsDNA enters through RuvA and exits via RuvB. An RuvB hexamer assembles on each DNA strand where it exits the tetramer. Each RuvB hexamer is contacted by two RuvA subunits (via domain III) on 2 adjacent RuvB subunits; this complex drives branch migration. In the full resolvosome a probable DNA-RuvA(4)-RuvB(12)-RuvC(2) complex forms which resolves the HJ.

It localises to the cytoplasm. The RuvA-RuvB-RuvC complex processes Holliday junction (HJ) DNA during genetic recombination and DNA repair, while the RuvA-RuvB complex plays an important role in the rescue of blocked DNA replication forks via replication fork reversal (RFR). RuvA specifically binds to HJ cruciform DNA, conferring on it an open structure. The RuvB hexamer acts as an ATP-dependent pump, pulling dsDNA into and through the RuvAB complex. HJ branch migration allows RuvC to scan DNA until it finds its consensus sequence, where it cleaves and resolves the cruciform DNA. This chain is Holliday junction branch migration complex subunit RuvA, found in Gloeobacter violaceus (strain ATCC 29082 / PCC 7421).